Consider the following 345-residue polypeptide: Dihydroorotase (345 aa).

Residues H14 and H16 each contribute to the Zn(2+) site. Substrate contacts are provided by residues 16–18 and N42; that span reads HLR. Zn(2+) is bound by residues K100, H137, and H175. At K100 the chain carries N6-carboxylysine. A substrate-binding site is contributed by H137. Residue L220 coordinates substrate. D248 provides a ligand contact to Zn(2+). D248 is an active-site residue. Substrate contacts are provided by H252 and A264.

The protein belongs to the metallo-dependent hydrolases superfamily. DHOase family. Class II DHOase subfamily. In terms of assembly, homodimer. It depends on Zn(2+) as a cofactor.

It catalyses the reaction (S)-dihydroorotate + H2O = N-carbamoyl-L-aspartate + H(+). It functions in the pathway pyrimidine metabolism; UMP biosynthesis via de novo pathway; (S)-dihydroorotate from bicarbonate: step 3/3. Functionally, catalyzes the reversible cyclization of carbamoyl aspartate to dihydroorotate. This is Dihydroorotase from Nitrosococcus oceani (strain ATCC 19707 / BCRC 17464 / JCM 30415 / NCIMB 11848 / C-107).